We begin with the raw amino-acid sequence, 770 residues long: tRNA(Met) cytidine acetyltransferase TmcA 2 (770 aa).

Positions 209 and 390 each coordinate ATP. One can recognise an N-acetyltransferase domain in the interval methionine 458 to serine 608. An acetyl-CoA-binding site is contributed by isoleucine 533 to valine 535.

This sequence belongs to the TmcA family.

It localises to the cytoplasm. The catalysed reaction is cytidine(34) in elongator tRNA(Met) + acetyl-CoA + ATP + H2O = N(4)-acetylcytidine(34) in elongator tRNA(Met) + ADP + phosphate + CoA + H(+). The enzyme catalyses a cytidine in RNA + acetyl-CoA + ATP + H2O = an N(4)-acetylcytidine in RNA + ADP + phosphate + CoA + H(+). It carries out the reaction a cytidine in tRNA + acetyl-CoA + ATP + H2O = an N(4)-acetylcytidine in tRNA + ADP + phosphate + CoA + H(+). It catalyses the reaction a cytidine in mRNA + acetyl-CoA + ATP + H2O = an N(4)-acetylcytidine in mRNA + ADP + phosphate + CoA + H(+). Its function is as follows. Catalyzes the formation of N(4)-acetylcytidine (ac(4)C) at the wobble position of tRNA(Met), by using acetyl-CoA as an acetyl donor and ATP (or GTP). Functionally, catalyzes the formation of 41 N(4)-acetylcytidine (ac(4)C) sites in RNA, almost always on the middle C of a CCG motif. Modifications are found mostly in tRNA, with small amounts found in rRNA and mRNA. This Saccharolobus solfataricus (strain ATCC 35092 / DSM 1617 / JCM 11322 / P2) (Sulfolobus solfataricus) protein is tRNA(Met) cytidine acetyltransferase TmcA 2.